Here is a 231-residue protein sequence, read N- to C-terminus: Probable caffeoyl-CoA O-methyltransferase 2 (231 aa).

S-adenosyl-L-methionine is bound by residues threonine 53, aspartate 75, 77-78, serine 83, aspartate 101, alanine 130, aspartate 152, aspartate 154, and tyrosine 161; that span reads GV. Residue aspartate 152 participates in a divalent metal cation binding. A divalent metal cation-binding residues include aspartate 178 and asparagine 179.

Belongs to the class I-like SAM-binding methyltransferase superfamily. Cation-dependent O-methyltransferase family. CCoAMT subfamily.

The enzyme catalyses (E)-caffeoyl-CoA + S-adenosyl-L-methionine = (E)-feruloyl-CoA + S-adenosyl-L-homocysteine + H(+). The sequence is that of Probable caffeoyl-CoA O-methyltransferase 2 (omt6) from Dictyostelium discoideum (Social amoeba).